A 691-amino-acid polypeptide reads, in one-letter code: Elongation factor G (691 aa).

The tr-type G domain maps to 8-282; that stretch reads ERVRNIGIAA…AVVDYLPAPV (275 aa). GTP-binding positions include 17-24, 81-85, and 135-138; these read AHIDAGKT, DTPGH, and NKMD.

The protein belongs to the TRAFAC class translation factor GTPase superfamily. Classic translation factor GTPase family. EF-G/EF-2 subfamily.

The protein localises to the cytoplasm. Catalyzes the GTP-dependent ribosomal translocation step during translation elongation. During this step, the ribosome changes from the pre-translocational (PRE) to the post-translocational (POST) state as the newly formed A-site-bound peptidyl-tRNA and P-site-bound deacylated tRNA move to the P and E sites, respectively. Catalyzes the coordinated movement of the two tRNA molecules, the mRNA and conformational changes in the ribosome. The chain is Elongation factor G from Prochlorococcus marinus (strain MIT 9312).